An 87-amino-acid chain; its full sequence is Small ribosomal subunit protein uS15c (87 aa).

It belongs to the universal ribosomal protein uS15 family. As to quaternary structure, part of the 30S ribosomal subunit.

Its subcellular location is the plastid. The protein resides in the chloroplast. This is Small ribosomal subunit protein uS15c (rps15) from Amborella trichopoda.